Consider the following 262-residue polypeptide: Histone chaperone cia1 (262 aa).

A disordered region spans residues 157 to 262 (IQWDNPDFDD…KPEEKPETSQ (106 aa)). Coiled coils occupy residues 173–196 (DADEEEEEEEADEMEEEFDEEGEG) and 223–253 (KGSEEEEEEEIDIEEEEEESALANASAAEEK). 2 stretches are compositionally biased toward acidic residues: residues 173 to 219 (DADE…GEGE) and 226 to 242 (EEEEEEEIDIEEEEEES). Basic and acidic residues predominate over residues 250–262 (AEEKPEEKPETSQ).

Belongs to the ASF1 family. Interacts with histone H3 and histone H4.

It localises to the nucleus. Histone chaperone that facilitates histone deposition and histone exchange and removal during nucleosome assembly and disassembly. This is Histone chaperone cia1 (cia1) from Schizosaccharomyces pombe (strain 972 / ATCC 24843) (Fission yeast).